Reading from the N-terminus, the 422-residue chain is tRNA(Met) cytidine acetate ligase (422 aa).

Residues 7-20, G102, N172, and R197 contribute to the ATP site; that span reads ITEYNPFHNGHLYH.

It belongs to the TmcAL family.

It localises to the cytoplasm. The enzyme catalyses cytidine(34) in elongator tRNA(Met) + acetate + ATP = N(4)-acetylcytidine(34) in elongator tRNA(Met) + AMP + diphosphate. In terms of biological role, catalyzes the formation of N(4)-acetylcytidine (ac(4)C) at the wobble position of elongator tRNA(Met), using acetate and ATP as substrates. First activates an acetate ion to form acetyladenylate (Ac-AMP) and then transfers the acetyl group to tRNA to form ac(4)C34. The sequence is that of tRNA(Met) cytidine acetate ligase from Halothermothrix orenii (strain H 168 / OCM 544 / DSM 9562).